Here is a 337-residue protein sequence, read N- to C-terminus: GTP 3',8-cyclase (337 aa).

The Radical SAM core domain maps to 18-242; the sequence is NFGRRFHYLR…DKADILDGPA (225 aa). Position 27 (R27) interacts with GTP. Positions 34 and 38 each coordinate [4Fe-4S] cluster. Y40 is a binding site for S-adenosyl-L-methionine. Residue C41 participates in [4Fe-4S] cluster binding. GTP is bound at residue R76. G80 is an S-adenosyl-L-methionine binding site. T107 lines the GTP pocket. S131 contacts S-adenosyl-L-methionine. K168 contributes to the GTP binding site. M202 serves as a coordination point for S-adenosyl-L-methionine. Residues C265 and C268 each coordinate [4Fe-4S] cluster. 270–272 is a GTP binding site; it reads RLR. Residue C282 coordinates [4Fe-4S] cluster.

It belongs to the radical SAM superfamily. MoaA family. As to quaternary structure, monomer and homodimer. Requires [4Fe-4S] cluster as cofactor.

It carries out the reaction GTP + AH2 + S-adenosyl-L-methionine = (8S)-3',8-cyclo-7,8-dihydroguanosine 5'-triphosphate + 5'-deoxyadenosine + L-methionine + A + H(+). Its pathway is cofactor biosynthesis; molybdopterin biosynthesis. Catalyzes the cyclization of GTP to (8S)-3',8-cyclo-7,8-dihydroguanosine 5'-triphosphate. The polypeptide is GTP 3',8-cyclase (Shewanella denitrificans (strain OS217 / ATCC BAA-1090 / DSM 15013)).